The primary structure comprises 259 residues: Proteasome subunit alpha (259 aa).

Belongs to the peptidase T1A family. The 20S proteasome core is composed of 14 alpha and 14 beta subunits that assemble into four stacked heptameric rings, resulting in a barrel-shaped structure. The two inner rings, each composed of seven catalytic beta subunits, are sandwiched by two outer rings, each composed of seven alpha subunits. The catalytic chamber with the active sites is on the inside of the barrel. Has a gated structure, the ends of the cylinder being occluded by the N-termini of the alpha-subunits. Is capped at one or both ends by the proteasome regulatory ATPase, PAN.

It is found in the cytoplasm. The formation of the proteasomal ATPase PAN-20S proteasome complex, via the docking of the C-termini of PAN into the intersubunit pockets in the alpha-rings, triggers opening of the gate for substrate entry. Interconversion between the open-gate and close-gate conformations leads to a dynamic regulation of the 20S proteasome proteolysis activity. Functionally, component of the proteasome core, a large protease complex with broad specificity involved in protein degradation. In Methanococcus maripaludis (strain C6 / ATCC BAA-1332), this protein is Proteasome subunit alpha.